Consider the following 194-residue polypeptide: Holliday junction branch migration complex subunit RuvA (194 aa).

The tract at residues 1–64 (MIAYIQGSIT…QDAHTLYGFS (64 aa)) is domain I. The interval 65–143 (TIEEKQCFLQ…KVGNMLSLQP (79 aa)) is domain II. Residues 144-150 (SGQEAIY) form a flexible linker region. The tract at residues 150-194 (YQEALAALSKLGIHKSTAEKTVAAILKEHQGEITVESLIKLALKG) is domain III.

It belongs to the RuvA family. As to quaternary structure, homotetramer. Forms an RuvA(8)-RuvB(12)-Holliday junction (HJ) complex. HJ DNA is sandwiched between 2 RuvA tetramers; dsDNA enters through RuvA and exits via RuvB. An RuvB hexamer assembles on each DNA strand where it exits the tetramer. Each RuvB hexamer is contacted by two RuvA subunits (via domain III) on 2 adjacent RuvB subunits; this complex drives branch migration. In the full resolvosome a probable DNA-RuvA(4)-RuvB(12)-RuvC(2) complex forms which resolves the HJ.

Its subcellular location is the cytoplasm. Functionally, the RuvA-RuvB-RuvC complex processes Holliday junction (HJ) DNA during genetic recombination and DNA repair, while the RuvA-RuvB complex plays an important role in the rescue of blocked DNA replication forks via replication fork reversal (RFR). RuvA specifically binds to HJ cruciform DNA, conferring on it an open structure. The RuvB hexamer acts as an ATP-dependent pump, pulling dsDNA into and through the RuvAB complex. HJ branch migration allows RuvC to scan DNA until it finds its consensus sequence, where it cleaves and resolves the cruciform DNA. This chain is Holliday junction branch migration complex subunit RuvA, found in Amoebophilus asiaticus (strain 5a2).